The primary structure comprises 244 residues: Ribonuclease HII (244 aa).

One can recognise an RNase H type-2 domain in the interval 23-236 (KIILGLDEAG…SKKLLKEFEE (214 aa)). Residues Asp29, Glu30, and Asp130 each coordinate a divalent metal cation.

It belongs to the RNase HII family. The cofactor is Mn(2+). Mg(2+) serves as cofactor.

It is found in the cytoplasm. It catalyses the reaction Endonucleolytic cleavage to 5'-phosphomonoester.. Endonuclease that specifically degrades the RNA of RNA-DNA hybrids. The chain is Ribonuclease HII from Methanococcus vannielii (strain ATCC 35089 / DSM 1224 / JCM 13029 / OCM 148 / SB).